A 104-amino-acid polypeptide reads, in one-letter code: Chromogranin-A (104 aa).

Cys17 and Cys38 are disulfide-bonded.

The protein belongs to the chromogranin/secretogranin protein family. Dimer.

It localises to the cytoplasmic vesicle. It is found in the secretory vesicle. Its subcellular location is the secreted. In terms of biological role, chromogranin A probably has a paracrine role in the regulation of secretion or maturation. The sequence is that of Chromogranin-A (CHGA) from Struthio camelus (Common ostrich).